We begin with the raw amino-acid sequence, 162 residues long: Cytochrome c-type biogenesis protein CcmE (162 aa).

Residues 1-7 (MTRKQRR) lie on the Cytoplasmic side of the membrane. A helical; Signal-anchor for type II membrane protein membrane pass occupies residues 8 to 28 (LTMIGGSLVVLAIAAALVLNA). Topologically, residues 29–162 (LRDSIVFFST…EASGKQGVSQ (134 aa)) are periplasmic. Heme-binding residues include His122 and Tyr126. Positions 138–162 (QGHWKDDYGPQAGAVEASGKQGVSQ) are disordered.

The protein belongs to the CcmE/CycJ family.

Its subcellular location is the cell inner membrane. Functionally, heme chaperone required for the biogenesis of c-type cytochromes. Transiently binds heme delivered by CcmC and transfers the heme to apo-cytochromes in a process facilitated by CcmF and CcmH. In Nitrobacter hamburgensis (strain DSM 10229 / NCIMB 13809 / X14), this protein is Cytochrome c-type biogenesis protein CcmE.